The chain runs to 201 residues: Dephospho-CoA kinase (201 aa).

Positions 4–201 constitute a DPCK domain; sequence SVGLTGNIAS…KYLREAKIKQ (198 aa). 12-17 is an ATP binding site; it reads ASGKST.

It belongs to the CoaE family.

The protein resides in the cytoplasm. The catalysed reaction is 3'-dephospho-CoA + ATP = ADP + CoA + H(+). Its pathway is cofactor biosynthesis; coenzyme A biosynthesis; CoA from (R)-pantothenate: step 5/5. Functionally, catalyzes the phosphorylation of the 3'-hydroxyl group of dephosphocoenzyme A to form coenzyme A. The polypeptide is Dephospho-CoA kinase (Legionella pneumophila (strain Lens)).